Reading from the N-terminus, the 290-residue chain is Tubulin polyglutamylase complex subunit 1 (290 aa).

The segment at 1 to 30 is disordered; it reads MAAVEKRRQAVPPPAGFTDSGRQSVSRAAG. 2 positions are modified to phosphoserine: S34 and S266.

In terms of assembly, part of the neuronal tubulin polyglutamylase complex which contains TPGS1, TPGS2, TTLL1, LRRC49 and NICN1. Interacts with PCM1, CSTPP1 and LRRC49.

The protein resides in the cytoplasm. It localises to the cytoskeleton. Its subcellular location is the cilium axoneme. The protein localises to the flagellum axoneme. It is found in the cilium basal body. The protein resides in the flagellum basal body. It localises to the cell projection. Its subcellular location is the axon. The protein localises to the dendrite. It is found in the microtubule organizing center. The protein resides in the centrosome. It localises to the centriolar satellite. Its function is as follows. Subunit of the tubulin polyglutamylase complex (TPGC). The complex mediates cilia and flagella polyglutamylation which is essential for their biogenesis and motility. May act in the targeting of the tubulin polyglutamylase complex. Required for the development of the spermatid flagellum. This is Tubulin polyglutamylase complex subunit 1 from Homo sapiens (Human).